The primary structure comprises 132 residues: Fatty acid-binding protein, brain (132 aa).

Val-2 carries the post-translational modification N-acetylvaline. An a fatty acid-binding site is contributed by 127 to 129; sequence RCY.

Belongs to the calycin superfamily. Fatty-acid binding protein (FABP) family. As to expression, expressed in brain and other neural tissues.

The protein localises to the cytoplasm. Functionally, B-FABP could be involved in the transport of a so far unknown hydrophobic ligand with potential morphogenic activity during CNS development. It is required for the establishment of the radial glial fiber system in developing brain, a system that is necessary for the migration of immature neurons to establish cortical layers. This Mus musculus (Mouse) protein is Fatty acid-binding protein, brain (Fabp7).